The sequence spans 911 residues: Nitrate reductase [NADH], clone PBNBR1412 (911 aa).

Residues 53–72 (NDAVDDSYDSSDDEDESHNR) form a disordered region. Over residues 56-68 (VDDSYDSSDDEDE) the composition is skewed to acidic residues. Position 191 (C191) interacts with Mo-molybdopterin. The Cytochrome b5 heme-binding domain occupies 539 to 614 (AKMYSMSEVR…LEDYRIGELI (76 aa)). Heme contacts are provided by H574 and H597. In terms of domain architecture, FAD-binding FR-type spans 654–766 (REKVPVTLIE…KGPLGHIEYL (113 aa)). FAD contacts are provided by residues 706 to 709 (RAYT), 723 to 727 (VVKVY), F728, F735, 740 to 742 (LMS), and T793.

It belongs to the nitrate reductase family. In terms of assembly, homodimer. It depends on FAD as a cofactor. The cofactor is heme. Mo-molybdopterin serves as cofactor.

The enzyme catalyses nitrite + NAD(+) + H2O = nitrate + NADH + H(+). In terms of biological role, nitrate reductase is a key enzyme involved in the first step of nitrate assimilation in plants, fungi and bacteria. The chain is Nitrate reductase [NADH], clone PBNBR1412 (NIA2) from Brassica napus (Rape).